A 77-amino-acid chain; its full sequence is uncharacterized protein (77 aa).

Residues Phe-11–Leu-65 enclose the HTH cro/C1-type domain. The H-T-H motif DNA-binding region spans Gln-22–Arg-41.

This is an uncharacterized protein from Sinorhizobium fredii (strain NBRC 101917 / NGR234).